A 302-amino-acid chain; its full sequence is B3 domain-containing protein At3g17010 (302 aa).

The TF-B3 1 DNA-binding region spans 21 to 116; that stretch reads FFKIFQRADL…VFHVNIYEQN (96 aa). The tract at residues 123 to 192 is disordered; it reads PRKFQTMGPS…KVKKKSKSKS (70 aa). Over residues 135-174 the composition is skewed to basic and acidic residues; the sequence is IKKEEGENSLIDVKKEEESDESPGRAEFLVRKKKTEDSKS. Basic residues predominate over residues 175–192; the sequence is SKKKMTRNKVKKKSKSKS. The segment at residues 199–292 is a DNA-binding region (TF-B3 2); that stretch reads VPEFKITIRK…EFVLLTSKKN (94 aa).

The protein resides in the nucleus. The protein is B3 domain-containing protein At3g17010 of Arabidopsis thaliana (Mouse-ear cress).